The following is a 166-amino-acid chain: Putative 4-hydroxy-4-methyl-2-oxoglutarate aldolase (166 aa).

Residues 74–77 and R96 each bind substrate; that span reads GDQI. An a divalent metal cation-binding site is contributed by D97.

The protein belongs to the class II aldolase/RraA-like family. In terms of assembly, homotrimer. A divalent metal cation is required as a cofactor.

It carries out the reaction 4-hydroxy-4-methyl-2-oxoglutarate = 2 pyruvate. The enzyme catalyses oxaloacetate + H(+) = pyruvate + CO2. Its function is as follows. Catalyzes the aldol cleavage of 4-hydroxy-4-methyl-2-oxoglutarate (HMG) into 2 molecules of pyruvate. Also contains a secondary oxaloacetate (OAA) decarboxylase activity due to the common pyruvate enolate transition state formed following C-C bond cleavage in the retro-aldol and decarboxylation reactions. This Xanthomonas campestris pv. campestris (strain B100) protein is Putative 4-hydroxy-4-methyl-2-oxoglutarate aldolase.